The chain runs to 388 residues: L-lactate dehydrogenase (388 aa).

The FMN hydroxy acid dehydrogenase domain maps to 1–380; the sequence is MIISAASDYR…SADALSRVTR (380 aa). Tyr24 provides a ligand contact to substrate. FMN is bound by residues Ser106 and Gln127. Tyr129 is a substrate binding site. Thr155 contacts FMN. Substrate is bound at residue Arg164. FMN is bound at residue Lys251. His275 serves as the catalytic Proton acceptor. Position 278 (Arg278) interacts with substrate. 306–330 is an FMN binding site; it reads DSGIRSGLDVVRMLALGADAVLLGR.

The protein belongs to the FMN-dependent alpha-hydroxy acid dehydrogenase family. It depends on FMN as a cofactor.

It is found in the cell inner membrane. It carries out the reaction (S)-lactate + A = pyruvate + AH2. Functionally, catalyzes the conversion of L-lactate to pyruvate. Is coupled to the respiratory chain. The polypeptide is L-lactate dehydrogenase (Xanthomonas euvesicatoria pv. vesicatoria (strain 85-10) (Xanthomonas campestris pv. vesicatoria)).